The following is a 431-amino-acid chain: 2-oxoisovalerate dehydrogenase subunit alpha, mitochondrial (431 aa).

140–142 (QYR) serves as a coordination point for thiamine diphosphate. Ser-189, Thr-194, and Gln-195 together coordinate K(+).

The protein belongs to the BCKDHA family. Thiamine diphosphate serves as cofactor.

The protein localises to the mitochondrion matrix. It carries out the reaction N(6)-[(R)-lipoyl]-L-lysyl-[protein] + 3-methyl-2-oxobutanoate + H(+) = N(6)-[(R)-S(8)-2-methylpropanoyldihydrolipoyl]-L-lysyl-[protein] + CO2. It participates in lipid metabolism; fatty acid biosynthesis. Its function is as follows. The branched-chain alpha-keto dehydrogenase complex catalyzes the overall conversion of alpha-keto acids to acyl-CoA and CO(2). It contains multiple copies of three enzymatic components: branched-chain alpha-keto acid decarboxylase (E1), lipoamide acyltransferase (E2) and lipoamide dehydrogenase (E3). Required for the production of the monomethyl branched-chain fatty acids (mmBCFAs) isopentadecanoate (C15iso) and isoheptadecanoate (C17iso). The sequence is that of 2-oxoisovalerate dehydrogenase subunit alpha, mitochondrial from Caenorhabditis elegans.